We begin with the raw amino-acid sequence, 372 residues long: Glycerol-3-phosphate dehydrogenase [NAD(+)] (372 aa).

Residues 1 to 16 (MAPSELNCTHQNQHSS) show a composition bias toward polar residues. A disordered region spans residues 1-23 (MAPSELNCTHQNQHSSGYDGPRS). NAD(+) is bound by residues 29-34 (GSGNWG), phenylalanine 60, phenylalanine 117, lysine 140, and alanine 173. Residue lysine 140 participates in substrate binding. Catalysis depends on lysine 225, which acts as the Proton acceptor. NAD(+)-binding residues include arginine 289, lysine 318, and glutamine 320. 289-290 (RN) contacts substrate.

The protein belongs to the NAD-dependent glycerol-3-phosphate dehydrogenase family.

The enzyme catalyses sn-glycerol 3-phosphate + NAD(+) = dihydroxyacetone phosphate + NADH + H(+). The sequence is that of Glycerol-3-phosphate dehydrogenase [NAD(+)] (GPDH) from Cuphea lanceolata (Cigar flower).